Reading from the N-terminus, the 408-residue chain is Eukaryotic initiation factor 4A-II (408 aa).

The interval 1 to 22 (MSGGSADYNSREHGGPEGMDPD) is disordered. The Q motif motif lies at 34–62 (DNFDDMNLKESLLRGIYAYGFEKPSAIQQ). Positions 65 to 236 (IIPCIKGYDV…KKFMRDPIRI (172 aa)) constitute a Helicase ATP-binding domain. 77-84 (QAQSGTGK) provides a ligand contact to ATP. Phosphothreonine is present on T160. Positions 183–186 (LDEA) match the DEAD box motif. The region spanning 247 to 408 (GIKQFYINVE…EMPMNVADLI (162 aa)) is the Helicase C-terminal domain.

The protein belongs to the DEAD box helicase family. eIF4A subfamily. As to quaternary structure, eIF4F is a multi-subunit complex, the composition of which varies with external and internal environmental conditions. It is composed of at least EIF4A, EIF4E and EIF4G1/EIFFG3. Interacts with EIF4E. May interact with NOM1.

The catalysed reaction is ATP + H2O = ADP + phosphate + H(+). In terms of biological role, ATP-dependent RNA helicase which is a subunit of the eIF4F complex involved in cap recognition and is required for mRNA binding to ribosome. In the current model of translation initiation, eIF4A unwinds RNA secondary structures in the 5'-UTR of mRNAs which is necessary to allow efficient binding of the small ribosomal subunit, and subsequent scanning for the initiator codon. This is Eukaryotic initiation factor 4A-II (EIF4A2) from Macaca fascicularis (Crab-eating macaque).